We begin with the raw amino-acid sequence, 285 residues long: Single myb histone 3 (285 aa).

The disordered stretch occupies residues 1 to 35; the sequence is MGAPKQKWTSEEEDALRRGVRKHGAGKWRTIQKDP. An HTH myb-type domain is found at 1–60; it reads MGAPKQKWTSEEEDALRRGVRKHGAGKWRTIQKDPQFSPILSSRSNIDLKDKWRNLSFSA. Positions 28 to 56 form a DNA-binding region, H-T-H motif; that stretch reads WRTIQKDPQFSPILSSRSNIDLKDKWRNL. Residues 113 to 181 form the H15 domain; that stretch reads TPPKYGAMIM…KVDNFYRLPD (69 aa). A coiled-coil region spans residues 226–255; it reads VKVTDAEAKAHDAHDQMMEAERMLKMAEDT.

It belongs to the histone H1/H5 family. SMH subfamily. In terms of assembly, forms a homodimer and heterodimers.

Its subcellular location is the nucleus. The protein localises to the chromosome. It localises to the nucleolus. The protein resides in the telomere. In terms of biological role, binds preferentially double-stranded telomeric repeats, but may also bind to the single telomeric strand. The polypeptide is Single myb histone 3 (SMH3) (Zea mays (Maize)).